A 327-amino-acid polypeptide reads, in one-letter code: Undecaprenyl-phosphate 4-deoxy-4-formamido-L-arabinose transferase (327 aa).

The next 2 helical transmembrane spans lie at 233 to 253 (ILSL…LLLI) and 268 to 288 (VFTL…GMGL).

Belongs to the glycosyltransferase 2 family.

It localises to the cell inner membrane. It carries out the reaction UDP-4-deoxy-4-formamido-beta-L-arabinose + di-trans,octa-cis-undecaprenyl phosphate = 4-deoxy-4-formamido-alpha-L-arabinopyranosyl di-trans,octa-cis-undecaprenyl phosphate + UDP. It functions in the pathway glycolipid biosynthesis; 4-amino-4-deoxy-alpha-L-arabinose undecaprenyl phosphate biosynthesis; 4-amino-4-deoxy-alpha-L-arabinose undecaprenyl phosphate from UDP-4-deoxy-4-formamido-beta-L-arabinose and undecaprenyl phosphate: step 1/2. It participates in bacterial outer membrane biogenesis; lipopolysaccharide biosynthesis. Its function is as follows. Catalyzes the transfer of 4-deoxy-4-formamido-L-arabinose from UDP to undecaprenyl phosphate. The modified arabinose is attached to lipid A and is required for resistance to polymyxin and cationic antimicrobial peptides. The protein is Undecaprenyl-phosphate 4-deoxy-4-formamido-L-arabinose transferase of Pectobacterium atrosepticum (strain SCRI 1043 / ATCC BAA-672) (Erwinia carotovora subsp. atroseptica).